The following is a 127-amino-acid chain: Aspartate 1-decarboxylase (127 aa).

Ser-25 serves as the catalytic Schiff-base intermediate with substrate; via pyruvic acid. The residue at position 25 (Ser-25) is a Pyruvic acid (Ser). Thr-57 lines the substrate pocket. The active-site Proton donor is the Tyr-58. 73-75 (GAA) serves as a coordination point for substrate.

The protein belongs to the PanD family. Heterooctamer of four alpha and four beta subunits. It depends on pyruvate as a cofactor. In terms of processing, is synthesized initially as an inactive proenzyme, which is activated by self-cleavage at a specific serine bond to produce a beta-subunit with a hydroxyl group at its C-terminus and an alpha-subunit with a pyruvoyl group at its N-terminus.

The protein localises to the cytoplasm. The catalysed reaction is L-aspartate + H(+) = beta-alanine + CO2. Its pathway is cofactor biosynthesis; (R)-pantothenate biosynthesis; beta-alanine from L-aspartate: step 1/1. Functionally, catalyzes the pyruvoyl-dependent decarboxylation of aspartate to produce beta-alanine. The protein is Aspartate 1-decarboxylase of Listeria welshimeri serovar 6b (strain ATCC 35897 / DSM 20650 / CCUG 15529 / CIP 8149 / NCTC 11857 / SLCC 5334 / V8).